Reading from the N-terminus, the 459-residue chain is Bifunctional protein GlmU (459 aa).

The tract at residues 1–230 (MSNRFAVILA…FDETLGVNDR (230 aa)) is pyrophosphorylase. Residues 9-12 (LAAG), lysine 23, glutamine 73, and 78-79 (GT) contribute to the UDP-N-acetyl-alpha-D-glucosamine site. Position 103 (aspartate 103) interacts with Mg(2+). Residues glycine 140, glutamate 155, asparagine 170, and asparagine 228 each coordinate UDP-N-acetyl-alpha-D-glucosamine. A Mg(2+)-binding site is contributed by asparagine 228. Positions 231–251 (VALSQAEIIMKNRINRKNMVN) are linker. Positions 252–459 (GVTIIDPSNT…VDQLLNKKKS (208 aa)) are N-acetyltransferase. Residues arginine 333 and lysine 351 each coordinate UDP-N-acetyl-alpha-D-glucosamine. Histidine 363 (proton acceptor) is an active-site residue. UDP-N-acetyl-alpha-D-glucosamine is bound by residues tyrosine 366 and asparagine 377. Acetyl-CoA-binding positions include 386-387 (NY), alanine 423, and arginine 440.

It in the N-terminal section; belongs to the N-acetylglucosamine-1-phosphate uridyltransferase family. The protein in the C-terminal section; belongs to the transferase hexapeptide repeat family. As to quaternary structure, homotrimer. Requires Mg(2+) as cofactor.

It is found in the cytoplasm. The catalysed reaction is alpha-D-glucosamine 1-phosphate + acetyl-CoA = N-acetyl-alpha-D-glucosamine 1-phosphate + CoA + H(+). It carries out the reaction N-acetyl-alpha-D-glucosamine 1-phosphate + UTP + H(+) = UDP-N-acetyl-alpha-D-glucosamine + diphosphate. It functions in the pathway nucleotide-sugar biosynthesis; UDP-N-acetyl-alpha-D-glucosamine biosynthesis; N-acetyl-alpha-D-glucosamine 1-phosphate from alpha-D-glucosamine 6-phosphate (route II): step 2/2. The protein operates within nucleotide-sugar biosynthesis; UDP-N-acetyl-alpha-D-glucosamine biosynthesis; UDP-N-acetyl-alpha-D-glucosamine from N-acetyl-alpha-D-glucosamine 1-phosphate: step 1/1. Its pathway is bacterial outer membrane biogenesis; LPS lipid A biosynthesis. Functionally, catalyzes the last two sequential reactions in the de novo biosynthetic pathway for UDP-N-acetylglucosamine (UDP-GlcNAc). The C-terminal domain catalyzes the transfer of acetyl group from acetyl coenzyme A to glucosamine-1-phosphate (GlcN-1-P) to produce N-acetylglucosamine-1-phosphate (GlcNAc-1-P), which is converted into UDP-GlcNAc by the transfer of uridine 5-monophosphate (from uridine 5-triphosphate), a reaction catalyzed by the N-terminal domain. The sequence is that of Bifunctional protein GlmU from Bacillus anthracis (strain A0248).